The sequence spans 540 residues: Medium/long-chain-fatty-acid--[acyl-carrier-protein] ligase FadD10 (540 aa).

Position 177 (Thr-177) interacts with Mg(2+). Ile-226, Val-316, and Ser-320 together coordinate ATP. Glu-321 provides a ligand contact to Mg(2+). Asp-408 is an ATP binding site.

Belongs to the ATP-dependent AMP-binding enzyme family. In terms of assembly, homodimer. Requires Mg(2+) as cofactor.

The protein localises to the cytoplasm. It catalyses the reaction a medium-chain fatty acid + holo-[ACP] + ATP = a medium-chain fatty acyl-[ACP] + AMP + diphosphate. It carries out the reaction a medium-chain fatty acid + ATP + H(+) = a medium-chain fatty acyl-AMP + diphosphate. The catalysed reaction is a medium-chain fatty acyl-AMP + holo-[ACP] = a medium-chain fatty acyl-[ACP] + AMP + H(+). The enzyme catalyses a long-chain fatty acid + holo-[ACP] + ATP = a long-chain fatty acyl-[ACP] + AMP + diphosphate. It catalyses the reaction a long-chain fatty acid + ATP + H(+) = a long-chain fatty acyl-AMP + diphosphate. It carries out the reaction a long-chain fatty acyl-AMP + holo-[ACP] = a long-chain fatty acyl-[ACP] + AMP + H(+). The catalysed reaction is a (2E)-enoyl fatty acid + holo-[ACP] + ATP = a (2E)-enoyl-[ACP] + AMP + diphosphate. The enzyme catalyses a (2E)-enoyl fatty acid + ATP + H(+) = a (2E)-2-fatty-enoyl-AMP + diphosphate. It catalyses the reaction a (2E)-2-fatty-enoyl-AMP + holo-[ACP] = a (2E)-enoyl-[ACP] + AMP + H(+). It carries out the reaction a (3R)-3-isocyanyl-fatty acid + holo-[ACP] + ATP = a (3R)-3-isocyanyl-fatty acyl-[ACP] + AMP + diphosphate. The catalysed reaction is a (3R)-3-isocyanyl-fatty acid + ATP + H(+) = a (3R)-3-isocyanyl-fatty acyl-AMP + diphosphate. The enzyme catalyses a (3R)-3-isocyanyl-fatty acyl-AMP + holo-[ACP] = a (3R)-3-isocyanyl-fatty acyl-[ACP] + AMP + H(+). It participates in lipid metabolism; fatty acid metabolism. Its function is as follows. Acyl:acyl-carrier protein ligase involved in the biosynthesis of a unique class of isonitrile lipopeptides (INLPs) that seem to function as virulence factors in M.tuberculosis and to play a role in metal acquisition. Catalyzes the activation of medium/long-chain fatty acids as acyl-adenylates (acyl-AMP), which are then transferred to the phosphopantetheine arm of the acyl-carrier protein (ACP) MT0109. Acts twice during the INLP pathway, catalyzing the activation of a (2E)-enoyl fatty acid as well as the corresponding (3R)-3-isocyanyl-fatty acid as acyl-adenylates (acyl-AMP), and then the acyl transfer to the dedicated acyl-carrier protein MT0109. In Mycobacterium tuberculosis (strain CDC 1551 / Oshkosh), this protein is Medium/long-chain-fatty-acid--[acyl-carrier-protein] ligase FadD10 (fadD10).